Reading from the N-terminus, the 162-residue chain is NAD(P)H-quinone oxidoreductase subunit N (162 aa).

Belongs to the complex I NdhN subunit family. As to quaternary structure, NDH-1 can be composed of about 15 different subunits; different subcomplexes with different compositions have been identified which probably have different functions.

It is found in the cellular thylakoid membrane. The enzyme catalyses a plastoquinone + NADH + (n+1) H(+)(in) = a plastoquinol + NAD(+) + n H(+)(out). The catalysed reaction is a plastoquinone + NADPH + (n+1) H(+)(in) = a plastoquinol + NADP(+) + n H(+)(out). Its function is as follows. NDH-1 shuttles electrons from an unknown electron donor, via FMN and iron-sulfur (Fe-S) centers, to quinones in the respiratory and/or the photosynthetic chain. The immediate electron acceptor for the enzyme in this species is believed to be plastoquinone. Couples the redox reaction to proton translocation, and thus conserves the redox energy in a proton gradient. Cyanobacterial NDH-1 also plays a role in inorganic carbon-concentration. The protein is NAD(P)H-quinone oxidoreductase subunit N of Trichormus variabilis (strain ATCC 29413 / PCC 7937) (Anabaena variabilis).